The chain runs to 31 residues: Elongation factor Tu (31 aa).

The protein belongs to the GTP-binding elongation factor family. EF-Tu/EF-1A subfamily. Monomer.

Its subcellular location is the cytoplasm. Its function is as follows. This protein promotes the GTP-dependent binding of aminoacyl-tRNA to the A-site of ribosomes during protein biosynthesis. In Streptomyces laurentii, this protein is Elongation factor Tu (tuf).